Consider the following 180-residue polypeptide: Endothelin-2 (180 aa).

Positions 1–26 (MVALPTAWCSVALALLVALHEGKSQS) are cleaved as a signal peptide. The propeptide occupies 27–47 (AATSEEPPAPSARARGSHLRL). 2 disulfides stabilise this stretch: Cys50–Cys64 and Cys52–Cys60. A propeptide spanning residues 71–180 (VNTPGQTAPY…ESSHSRWRKR (110 aa)) is cleaved from the precursor. The segment at 97–112 (CECYSTRDSACVTFCH) is endothelin-like. The tract at residues 157–180 (NFTRHQQQKATREPESSHSRWRKR) is disordered.

The protein belongs to the endothelin/sarafotoxin family.

Its subcellular location is the secreted. Endothelins are endothelium-derived vasoconstrictor peptides. The polypeptide is Endothelin-2 (EDN2) (Atelerix albiventris (Middle-African hedgehog)).